The following is a 211-amino-acid chain: Imidazole glycerol phosphate synthase subunit HisH (211 aa).

The region spanning 3-211 (VVAVIDYEMG…VSQVREKIAA (209 aa)) is the Glutamine amidotransferase type-1 domain. The Nucleophile role is filled by Cys-81. Active-site residues include His-186 and Glu-188.

In terms of assembly, heterodimer of HisH and HisF.

The protein localises to the cytoplasm. It catalyses the reaction 5-[(5-phospho-1-deoxy-D-ribulos-1-ylimino)methylamino]-1-(5-phospho-beta-D-ribosyl)imidazole-4-carboxamide + L-glutamine = D-erythro-1-(imidazol-4-yl)glycerol 3-phosphate + 5-amino-1-(5-phospho-beta-D-ribosyl)imidazole-4-carboxamide + L-glutamate + H(+). The catalysed reaction is L-glutamine + H2O = L-glutamate + NH4(+). The protein operates within amino-acid biosynthesis; L-histidine biosynthesis; L-histidine from 5-phospho-alpha-D-ribose 1-diphosphate: step 5/9. In terms of biological role, IGPS catalyzes the conversion of PRFAR and glutamine to IGP, AICAR and glutamate. The HisH subunit catalyzes the hydrolysis of glutamine to glutamate and ammonia as part of the synthesis of IGP and AICAR. The resulting ammonia molecule is channeled to the active site of HisF. The sequence is that of Imidazole glycerol phosphate synthase subunit HisH from Trichormus variabilis (strain ATCC 29413 / PCC 7937) (Anabaena variabilis).